A 167-amino-acid polypeptide reads, in one-letter code: Effector CFEM8 (167 aa).

A signal peptide spans 1–17 (MQFSIVVMAALASLASA). Positions 18–112 (QSMDGIPTCA…TPAAAAPYPT (95 aa)) constitute a CFEM domain. Intrachain disulfides connect Cys-26–Cys-68, Cys-30–Cys-63, Cys-40–Cys-47, and Cys-49–Cys-85. Asp-44 serves as a coordination point for heme. Asn-117 and Asn-135 each carry an N-linked (GlcNAc...) asparagine glycan. Gly-143 is lipidated: GPI-anchor amidated glycine. Residues 144-167 (SAPQNVAGGLAGIFGLVVAAAFAL) constitute a propeptide, removed in mature form.

The protein belongs to the RBT5 family.

The protein resides in the cell membrane. It is found in the secreted. It localises to the host nucleus. The protein localises to the host cell membrane. Functionally, appears to function during host infection, and may play a role in suppressing the host immune response. This Marssonina brunnea f. sp. multigermtubi (strain MB_m1) (Marssonina leaf spot fungus) protein is Effector CFEM8.